A 137-amino-acid chain; its full sequence is Small ribosomal subunit protein uS12 (137 aa).

It belongs to the universal ribosomal protein uS12 family. In terms of assembly, part of the 30S ribosomal subunit. Contacts proteins S8 and S17. May interact with IF1 in the 30S initiation complex.

In terms of biological role, with S4 and S5 plays an important role in translational accuracy. Its function is as follows. Interacts with and stabilizes bases of the 16S rRNA that are involved in tRNA selection in the A site and with the mRNA backbone. Located at the interface of the 30S and 50S subunits, it traverses the body of the 30S subunit contacting proteins on the other side and probably holding the rRNA structure together. The combined cluster of proteins S8, S12 and S17 appears to hold together the shoulder and platform of the 30S subunit. This chain is Small ribosomal subunit protein uS12, found in Lactiplantibacillus plantarum (strain ATCC BAA-793 / NCIMB 8826 / WCFS1) (Lactobacillus plantarum).